The sequence spans 244 residues: Extracellular superoxide dismutase [Cu-Zn] (244 aa).

The N-terminal stretch at methionine 1–glycine 15 is a signal peptide. 2 disulfides stabilise this stretch: cysteine 70-cysteine 215 and cysteine 132-cysteine 214. An N-linked (GlcNAc...) asparagine glycan is attached at asparagine 114. Residues histidine 121, histidine 123, and histidine 138 each coordinate Cu cation. 4 residues coordinate Zn(2+): histidine 138, histidine 146, histidine 149, and aspartate 152. Histidine 188 provides a ligand contact to Cu cation. The tract at residues alanine 224–threonine 244 is disordered.

The protein belongs to the Cu-Zn superoxide dismutase family. In terms of assembly, homodimer. Interacts with ATP7A; this interaction is copper-dependent and is required for SOD3 activity. It depends on Cu cation as a cofactor. Requires Zn(2+) as cofactor.

Its subcellular location is the secreted. It is found in the extracellular space. It localises to the golgi apparatus. The protein resides in the trans-Golgi network. It carries out the reaction 2 superoxide + 2 H(+) = H2O2 + O2. Its function is as follows. Protect the extracellular space from toxic effect of reactive oxygen intermediates by converting superoxide radicals into hydrogen peroxide and oxygen. The polypeptide is Extracellular superoxide dismutase [Cu-Zn] (Sod3) (Rattus norvegicus (Rat)).